We begin with the raw amino-acid sequence, 862 residues long: DNA topoisomerase 3-beta-1 (862 aa).

In terms of domain architecture, Toprim spans 3–153 (TVLMVAEKPS…EKTVFRARFS (151 aa)). The region spanning 171 to 593 (DHNEALSVDA…HTLDVFKRKF (423 aa)) is the Topo IA-type catalytic domain. The O-(5'-phospho-DNA)-tyrosine intermediate role is filled by Tyr-336. Positions 821-851 (PMHRGGPGRRQGRGRGRARRPPGKPNPRRPK) are enriched in basic residues. Residues 821-854 (PMHRGGPGRRQGRGRGRARRPPGKPNPRRPKDKM) form a disordered region.

Belongs to the type IA topoisomerase family. As to expression, isoform 1 is found in testis, heart and skeletal muscle. A 4 kb transcript which probably represents isoform 2 is found in thymus, kidney and pancreas.

It carries out the reaction ATP-independent breakage of single-stranded DNA, followed by passage and rejoining.. Functionally, releases the supercoiling and torsional tension of DNA introduced during the DNA replication and transcription by transiently cleaving and rejoining one strand of the DNA duplex. Introduces a single-strand break via transesterification at a target site in duplex DNA. The scissile phosphodiester is attacked by the catalytic tyrosine of the enzyme, resulting in the formation of a DNA-(5'-phosphotyrosyl)-enzyme intermediate and the expulsion of a 3'-OH DNA strand. The free DNA strand than undergoes passage around the unbroken strand thus removing DNA supercoils. Finally, in the religation step, the DNA 3'-OH attacks the covalent intermediate to expel the active-site tyrosine and restore the DNA phosphodiester backbone. Possesses negatively supercoiled DNA relaxing activity. The polypeptide is DNA topoisomerase 3-beta-1 (TOP3B) (Homo sapiens (Human)).